A 598-amino-acid chain; its full sequence is DNA mismatch repair protein MutL (598 aa).

The protein belongs to the DNA mismatch repair MutL/HexB family.

This protein is involved in the repair of mismatches in DNA. It is required for dam-dependent methyl-directed DNA mismatch repair. May act as a 'molecular matchmaker', a protein that promotes the formation of a stable complex between two or more DNA-binding proteins in an ATP-dependent manner without itself being part of a final effector complex. The protein is DNA mismatch repair protein MutL of Thiobacillus denitrificans (strain ATCC 25259 / T1).